Reading from the N-terminus, the 404-residue chain is uncharacterized protein (404 aa).

The protein belongs to the lymphocryptovirus BTRF1 family.

This is an uncharacterized protein from Epstein-Barr virus (strain GD1) (HHV-4).